Consider the following 400-residue polypeptide: Nicotinate phosphoribosyltransferase (400 aa).

A Phosphohistidine; by autocatalysis modification is found at histidine 220.

This sequence belongs to the NAPRTase family. In terms of processing, transiently phosphorylated on a His residue during the reaction cycle. Phosphorylation strongly increases the affinity for substrates and increases the rate of nicotinate D-ribonucleotide production. Dephosphorylation regenerates the low-affinity form of the enzyme, leading to product release.

It catalyses the reaction nicotinate + 5-phospho-alpha-D-ribose 1-diphosphate + ATP + H2O = nicotinate beta-D-ribonucleotide + ADP + phosphate + diphosphate. The protein operates within cofactor biosynthesis; NAD(+) biosynthesis; nicotinate D-ribonucleotide from nicotinate: step 1/1. Its function is as follows. Catalyzes the synthesis of beta-nicotinate D-ribonucleotide from nicotinate and 5-phospho-D-ribose 1-phosphate at the expense of ATP. The chain is Nicotinate phosphoribosyltransferase from Escherichia coli (strain K12 / MC4100 / BW2952).